The following is a 534-amino-acid chain: MKLLAVRRLLRIQRVVIRYRLDDLLFDLPLPWFLLALRFALPWRWFPRKPLDLSRGARLRLALQDLGPIFIKFGQILSTRRDLLPEDIADELMLLQDRVPPFDSQKSVALIEAQLGKKISDVFSRFDIEPLASASVAQVHAAKLKTGEEVVVKVIRPGLKPIIAQDLAWLFILARAAEKLSADARLLHPVDVVSDYEKTIYDELDLLREAANASQLKRNFEGSPLLYVPQVYWDWCRPKVLVMERIYGIQVTDLATLADQRTDMKMLAERGVEIFFTQVFRDSFFHADMHPGNIFVSTVQPWSPQYIAIDCGIVGSLTPEDQDYLARNLFAFFKRDYRRVAQLHIDSGWVPAETKLNEFEAAIRTVCEPIFEKPLKDISFGQVLMRLFQTARRFNMEVQPQLVLLQKTLLNIEGLGRQLYPDLDLWNTAQPFLERWMRERVSPKAVLGNIHSQIEQLPHLANMTRDLLERMSQPHAADPPAPWHKRKDDWFLRLLGTAHLGGGAVLAAGGPLHELGHWPAGIMIAVGLYLIVRR.

Residues 23–43 traverse the membrane as a helical segment; it reads DLLFDLPLPWFLLALRFALPW. One can recognise a Protein kinase domain in the interval 125–492; the sequence is RFDIEPLASA…WHKRKDDWFL (368 aa). ATP-binding positions include 131 to 139 and Lys-153; that span reads LASASVAQV. The Proton acceptor role is filled by Asp-288. The next 2 helical transmembrane spans lie at 490-510 and 512-532; these read WFLR…AAGG and LHEL…YLIV.

This sequence belongs to the ABC1 family. UbiB subfamily.

It localises to the cell inner membrane. It participates in cofactor biosynthesis; ubiquinone biosynthesis [regulation]. Its function is as follows. Is probably a protein kinase regulator of UbiI activity which is involved in aerobic coenzyme Q (ubiquinone) biosynthesis. This chain is Probable protein kinase UbiB, found in Pseudomonas fluorescens (strain ATCC BAA-477 / NRRL B-23932 / Pf-5).